Reading from the N-terminus, the 84-residue chain is Putative membrane protein insertion efficiency factor (84 aa).

Residues 63–84 (WGGSGYDPVPGADPEHDRRPRG) are disordered. Residues 75–84 (DPEHDRRPRG) show a composition bias toward basic and acidic residues.

It belongs to the UPF0161 family.

The protein resides in the cell inner membrane. Functionally, could be involved in insertion of integral membrane proteins into the membrane. This is Putative membrane protein insertion efficiency factor from Cereibacter sphaeroides (strain ATCC 17025 / ATH 2.4.3) (Rhodobacter sphaeroides).